Consider the following 141-residue polypeptide: Terrelysin (141 aa).

It belongs to the aegerolysin family.

The protein resides in the cytoplasm. Functionally, hemolysins are potential virulence factors. Has hemolytic activity against sheep erythrocytes in vitro. This chain is Terrelysin, found in Aspergillus terreus (strain NIH 2624 / FGSC A1156).